A 661-amino-acid polypeptide reads, in one-letter code: PAN2-PAN3 deadenylation complex subunit PAN3 (661 aa).

Disordered regions lie at residues 1 to 26 (MASAGKPALDDSRRGTGSPKIKAREN) and 53 to 130 (DPHK…LRQD). A C3H1-type zinc finger spans residues 26 to 55 (NAKDTLCRNITIYGRCRYEDKGCAFNHDPH). The span at 75–102 (SFTPSLLSSNGSSPTSTPATTKKMTTIS) shows a compositional bias: low complexity. Positions 115-130 (SVVSRSNASTPGLRQD) are enriched in polar residues. The segment at 263–524 (QTLPNTQLPA…NIDIFITGIS (262 aa)) is pseudokinase domain. ATP is bound by residues R315, 364–371 (DYHPLSKT), and 424–425 (SK). Residues 525–563 (SQLMSTFDSALHLDDQLTSDLSRELENGRLVRLMTKLNF) adopt a coiled-coil conformation. A knob domain region spans residues 564 to 661 (VNERPEYEHD…ALMKPARRMH (98 aa)).

Belongs to the protein kinase superfamily. PAN3 family. Homodimer. Forms a heterotrimer with a catalytic subunit pan2 to form the poly(A)-nuclease (PAN) deadenylation complex. Interacts (via PAM-2 motif) with poly(A)-binding protein pab1 (via PABC domain), conferring substrate specificity of the enzyme complex.

It localises to the cytoplasm. Regulatory subunit of the poly(A)-nuclease (PAN) deadenylation complex, one of two cytoplasmic mRNA deadenylases involved in mRNA turnover. PAN specifically shortens poly(A) tails of RNA and the activity is stimulated by poly(A)-binding protein pab1. PAN deadenylation is followed by rapid degradation of the shortened mRNA tails by the CCR4-NOT complex. Deadenylated mRNAs are then degraded by two alternative mechanisms, namely exosome-mediated 3'-5' exonucleolytic degradation, or deadenylation-dependent mRNA decaping and subsequent 5'-3' exonucleolytic degradation by xrn1. May also be involved in post-transcriptional maturation of mRNA poly(A) tails. pan3 acts as a positive regulator for PAN activity, recruiting the catalytic subunit pan2 to mRNA via its interaction with RNA and with pab1. In Neosartorya fischeri (strain ATCC 1020 / DSM 3700 / CBS 544.65 / FGSC A1164 / JCM 1740 / NRRL 181 / WB 181) (Aspergillus fischerianus), this protein is PAN2-PAN3 deadenylation complex subunit PAN3.